The primary structure comprises 842 residues: MASPMEAVARSSLVLAPRRRRALGLLPAAAAAAPFVLDCRRRHNGGMRRPHVSFACSAELDTGRRQLPSTGTRAVMSSCPGYVEGRMVGENTSQINMGWEARILRHLENPEFLPSSYDIAWVAMVPLPGTDHLQAPCFPECVEWILQNQHSNGSWGVNEFDSSASKDILLSTLACIIALEKWNVGSEQIRRGLHFIAKNFSIVIDDQIAAPIGFNLTFPAMVNLAIKMGLEFPASEISIDQILHLRDMELKRLAGDESLGKEAYFAYIAEGLEESMVDWSEVMKFQGKNGSLFNSPAATAAALVHRYDDKALGYLYSVVNKFGGEVPTVYPLNIFSQLSMVDTLVNIGISRHFSSDIKRILDKTYILWSQRDEEVMLDLPTCAMAFRLLRMNGYGVSSDDLSHVAEASTFHNSVEGYLDDTKSLLELYKASKVSLSENEPILEKMGCWSGSLLKEKLCSDDIRGTPILREVEYALKFPFYATLEPLDHKWNIENFDARAYQKIKTKNMPCHVNEDLLALAAEDFSFCQSTYQNEIQHLESWEKENKLDQLEFTRKNLINSYLSAAATISPYELSDARIACAKSIALTLVADDFFDVGSSKEEQENLISLVEKWDQYHKVEFYSENVKAVFFALYSTVNQLGAMASAVQNRDVTKYNVESWLDYLRSLATDAEWQRSKYVPTMEEYMKNSIVTFALGPTILIALYFMGQNLWEDIVKNAEYDELFRLMNTCGRLQNDIQSFERECKDGKLNSVSLLVLDSKDVMSVEEAKEAINESISSCRRELLRLVVREDGVIPKSCKEMFWNLYKTSHVFYSQADGFSSPKEMMGAMNGVIFEPLKTRGN.

The transit peptide at 1–56 (MASPMEAVARSSLVLAPRRRRALGLLPAAAAAAPFVLDCRRRHNGGMRRPHVSFAC) directs the protein to the chloroplast. The Mg(2+) site is built by Asp-591, Asp-595, Asn-735, Ser-739, and Glu-743. A DDXXD motif motif is present at residues 591–595 (DDFFD).

This sequence belongs to the terpene synthase family. The cofactor is Mg(2+). As to expression, expressed in roots.

The protein resides in the plastid. It is found in the chloroplast. It carries out the reaction 9alpha-copalyl diphosphate = 9beta-pimara-7,15-diene + diphosphate. In terms of biological role, involved in the biosynthesis of momilactone A and B phytoalexins. Catalyzes the conversion of syn-copalyl diphosphate to the phytoalexin precursor syn-pimara-7,15-diene. The chain is 9-beta-pimara-7,15-diene synthase, chloroplastic from Oryza sativa subsp. japonica (Rice).